A 135-amino-acid chain; its full sequence is Small ribosomal subunit protein uS12 (135 aa).

Asp89 is modified (3-methylthioaspartic acid). The disordered stretch occupies residues 114 to 135 (RSRYGAKKGAAKQAAAAKSKKK). Low complexity predominate over residues 124–135 (AKQAAAAKSKKK).

It belongs to the universal ribosomal protein uS12 family. As to quaternary structure, part of the 30S ribosomal subunit. Contacts proteins S8 and S17. May interact with IF1 in the 30S initiation complex.

Its function is as follows. With S4 and S5 plays an important role in translational accuracy. Interacts with and stabilizes bases of the 16S rRNA that are involved in tRNA selection in the A site and with the mRNA backbone. Located at the interface of the 30S and 50S subunits, it traverses the body of the 30S subunit contacting proteins on the other side and probably holding the rRNA structure together. The combined cluster of proteins S8, S12 and S17 appears to hold together the shoulder and platform of the 30S subunit. This Amoebophilus asiaticus (strain 5a2) protein is Small ribosomal subunit protein uS12.